Consider the following 83-residue polypeptide: Cytochrome b559 subunit alpha (83 aa).

Residues Ile-21 to Trp-35 form a helical membrane-spanning segment. Heme is bound at residue His-23.

Belongs to the PsbE/PsbF family. As to quaternary structure, heterodimer of an alpha subunit and a beta subunit. PSII is composed of 1 copy each of membrane proteins PsbA, PsbB, PsbC, PsbD, PsbE, PsbF, PsbH, PsbI, PsbJ, PsbK, PsbL, PsbM, PsbT, PsbX, PsbY, PsbZ, Psb30/Ycf12, at least 3 peripheral proteins of the oxygen-evolving complex and a large number of cofactors. It forms dimeric complexes. Heme b serves as cofactor.

The protein localises to the plastid. Its subcellular location is the chloroplast thylakoid membrane. In terms of biological role, this b-type cytochrome is tightly associated with the reaction center of photosystem II (PSII). PSII is a light-driven water:plastoquinone oxidoreductase that uses light energy to abstract electrons from H(2)O, generating O(2) and a proton gradient subsequently used for ATP formation. It consists of a core antenna complex that captures photons, and an electron transfer chain that converts photonic excitation into a charge separation. The polypeptide is Cytochrome b559 subunit alpha (Lotus japonicus (Lotus corniculatus var. japonicus)).